A 957-amino-acid polypeptide reads, in one-letter code: Glycine dehydrogenase (decarboxylating) (957 aa).

Lysine 708 bears the N6-(pyridoxal phosphate)lysine mark.

This sequence belongs to the GcvP family. As to quaternary structure, the glycine cleavage system is composed of four proteins: P, T, L and H. Requires pyridoxal 5'-phosphate as cofactor.

The enzyme catalyses N(6)-[(R)-lipoyl]-L-lysyl-[glycine-cleavage complex H protein] + glycine + H(+) = N(6)-[(R)-S(8)-aminomethyldihydrolipoyl]-L-lysyl-[glycine-cleavage complex H protein] + CO2. In terms of biological role, the glycine cleavage system catalyzes the degradation of glycine. The P protein binds the alpha-amino group of glycine through its pyridoxal phosphate cofactor; CO(2) is released and the remaining methylamine moiety is then transferred to the lipoamide cofactor of the H protein. This is Glycine dehydrogenase (decarboxylating) from Salmonella newport (strain SL254).